A 701-amino-acid chain; its full sequence is Elongation factor G (701 aa).

One can recognise a tr-type G domain in the interval 8 to 286; sequence ERIRNIGIIA…AVVYYLPSPV (279 aa). Residues 17–24, 85–89, and 139–142 each bind GTP; these read AHIDAGKT, DTPGH, and NKMD.

Belongs to the TRAFAC class translation factor GTPase superfamily. Classic translation factor GTPase family. EF-G/EF-2 subfamily.

It localises to the cytoplasm. Functionally, catalyzes the GTP-dependent ribosomal translocation step during translation elongation. During this step, the ribosome changes from the pre-translocational (PRE) to the post-translocational (POST) state as the newly formed A-site-bound peptidyl-tRNA and P-site-bound deacylated tRNA move to the P and E sites, respectively. Catalyzes the coordinated movement of the two tRNA molecules, the mRNA and conformational changes in the ribosome. The protein is Elongation factor G of Roseiflexus castenholzii (strain DSM 13941 / HLO8).